The chain runs to 234 residues: Large ribosomal subunit protein uL1 (234 aa).

It belongs to the universal ribosomal protein uL1 family. Part of the 50S ribosomal subunit.

Binds directly to 23S rRNA. The L1 stalk is quite mobile in the ribosome, and is involved in E site tRNA release. In terms of biological role, protein L1 is also a translational repressor protein, it controls the translation of the L11 operon by binding to its mRNA. This chain is Large ribosomal subunit protein uL1, found in Erwinia tasmaniensis (strain DSM 17950 / CFBP 7177 / CIP 109463 / NCPPB 4357 / Et1/99).